A 262-amino-acid chain; its full sequence is tRNA pseudouridine synthase A (262 aa).

D52 acts as the Nucleophile in catalysis. Substrate is bound at residue Y110.

The protein belongs to the tRNA pseudouridine synthase TruA family. As to quaternary structure, homodimer.

It catalyses the reaction uridine(38/39/40) in tRNA = pseudouridine(38/39/40) in tRNA. Its function is as follows. Formation of pseudouridine at positions 38, 39 and 40 in the anticodon stem and loop of transfer RNAs. The protein is tRNA pseudouridine synthase A of Hydrogenovibrio crunogenus (strain DSM 25203 / XCL-2) (Thiomicrospira crunogena).